A 259-amino-acid polypeptide reads, in one-letter code: ATP synthase subunit b 3 (259 aa).

The helical transmembrane segment at 5–27 (WWTLGLQAINVLILIWILSRFLF) threads the bilayer.

It belongs to the ATPase B chain family. F-type ATPases have 2 components, F(1) - the catalytic core - and F(0) - the membrane proton channel. F(1) has five subunits: alpha(3), beta(3), gamma(1), delta(1), epsilon(1). F(0) has three main subunits: a(1), b(2) and c(10-14). The alpha and beta chains form an alternating ring which encloses part of the gamma chain. F(1) is attached to F(0) by a central stalk formed by the gamma and epsilon chains, while a peripheral stalk is formed by the delta and b chains.

The protein localises to the cell inner membrane. F(1)F(0) ATP synthase produces ATP from ADP in the presence of a proton or sodium gradient. F-type ATPases consist of two structural domains, F(1) containing the extramembraneous catalytic core and F(0) containing the membrane proton channel, linked together by a central stalk and a peripheral stalk. During catalysis, ATP synthesis in the catalytic domain of F(1) is coupled via a rotary mechanism of the central stalk subunits to proton translocation. Functionally, component of the F(0) channel, it forms part of the peripheral stalk, linking F(1) to F(0). The polypeptide is ATP synthase subunit b 3 (Beijerinckia indica subsp. indica (strain ATCC 9039 / DSM 1715 / NCIMB 8712)).